Here is a 198-residue protein sequence, read N- to C-terminus: Protein GrpE (198 aa).

Over residues 1–18 (MSEQEQKVEIPEVEKQEE) the composition is skewed to basic and acidic residues. A disordered region spans residues 1–33 (MSEQEQKVEIPEVEKQEEVVVEETQQAEHSQEF).

This sequence belongs to the GrpE family. In terms of assembly, homodimer.

The protein localises to the cytoplasm. Participates actively in the response to hyperosmotic and heat shock by preventing the aggregation of stress-denatured proteins, in association with DnaK and GrpE. It is the nucleotide exchange factor for DnaK and may function as a thermosensor. Unfolded proteins bind initially to DnaJ; upon interaction with the DnaJ-bound protein, DnaK hydrolyzes its bound ATP, resulting in the formation of a stable complex. GrpE releases ADP from DnaK; ATP binding to DnaK triggers the release of the substrate protein, thus completing the reaction cycle. Several rounds of ATP-dependent interactions between DnaJ, DnaK and GrpE are required for fully efficient folding. This is Protein GrpE from Haemophilus influenzae (strain ATCC 51907 / DSM 11121 / KW20 / Rd).